The chain runs to 527 residues: NAD(P)H-quinone oxidoreductase chain 4 1 (527 aa).

A run of 13 helical transmembrane segments spans residues F6–I26, W36–S56, L91–F111, P113–V133, L136–I156, F169–F189, L212–H232, T243–L263, A275–T295, I306–D326, G331–G351, L387–T407, and V417–M437.

This sequence belongs to the complex I subunit 4 family.

The protein resides in the cellular thylakoid membrane. It catalyses the reaction a plastoquinone + NADH + (n+1) H(+)(in) = a plastoquinol + NAD(+) + n H(+)(out). It carries out the reaction a plastoquinone + NADPH + (n+1) H(+)(in) = a plastoquinol + NADP(+) + n H(+)(out). In terms of biological role, NDH-1 shuttles electrons from NAD(P)H, via FMN and iron-sulfur (Fe-S) centers, to quinones in the respiratory chain. The immediate electron acceptor for the enzyme in this species is believed to be plastoquinone. Couples the redox reaction to proton translocation (for every two electrons transferred, four hydrogen ions are translocated across the cytoplasmic membrane), and thus conserves the redox energy in a proton gradient. In Microcystis aeruginosa (strain NIES-843 / IAM M-2473), this protein is NAD(P)H-quinone oxidoreductase chain 4 1.